We begin with the raw amino-acid sequence, 143 residues long: Small ribosomal subunit protein uS9 (143 aa).

The residue at position 2 (Ser-2) is an N-acetylserine. Residues 123 to 143 (MPEPKKFGGKGARSRYQKSYR) form a disordered region. Residues 134–143 (ARSRYQKSYR) show a composition bias toward basic residues.

This sequence belongs to the universal ribosomal protein uS9 family.

This chain is Small ribosomal subunit protein uS9 (RPS16), found in Maudiozyma exigua (Yeast).